Reading from the N-terminus, the 458-residue chain is Argininosuccinate lyase (458 aa).

This sequence belongs to the lyase 1 family. Argininosuccinate lyase subfamily.

The protein resides in the cytoplasm. The catalysed reaction is 2-(N(omega)-L-arginino)succinate = fumarate + L-arginine. Its pathway is amino-acid biosynthesis; L-arginine biosynthesis; L-arginine from L-ornithine and carbamoyl phosphate: step 3/3. This chain is Argininosuccinate lyase, found in Salmonella choleraesuis (strain SC-B67).